The chain runs to 203 residues: Peptidyl-tRNA hydrolase (203 aa).

Tyrosine 14 lines the tRNA pocket. The active-site Proton acceptor is histidine 19. Residues tyrosine 64, asparagine 66, and asparagine 112 each coordinate tRNA.

This sequence belongs to the PTH family. In terms of assembly, monomer.

It localises to the cytoplasm. The catalysed reaction is an N-acyl-L-alpha-aminoacyl-tRNA + H2O = an N-acyl-L-amino acid + a tRNA + H(+). Functionally, hydrolyzes ribosome-free peptidyl-tRNAs (with 1 or more amino acids incorporated), which drop off the ribosome during protein synthesis, or as a result of ribosome stalling. Its function is as follows. Catalyzes the release of premature peptidyl moieties from peptidyl-tRNA molecules trapped in stalled 50S ribosomal subunits, and thus maintains levels of free tRNAs and 50S ribosomes. This is Peptidyl-tRNA hydrolase from Methylobacterium sp. (strain 4-46).